Reading from the N-terminus, the 138-residue chain is Basic phospholipase A2 B (138 aa).

Positions 1-16 (MRALWIVAVLLLGVEG) are cleaved as a signal peptide. Cystine bridges form between Cys42/Cys131, Cys44/Cys60, Cys59/Cys111, Cys65/Cys138, Cys66/Cys104, Cys73/Cys97, and Cys91/Cys102. Ca(2+) contacts are provided by Tyr43, Gly45, and Gly47. The active site involves His63. Position 64 (Asp64) interacts with Ca(2+). Residue Asp105 is part of the active site.

This sequence belongs to the phospholipase A2 family. Group II subfamily. D49 sub-subfamily. Requires Ca(2+) as cofactor. As to expression, expressed by the venom gland.

It localises to the secreted. It catalyses the reaction a 1,2-diacyl-sn-glycero-3-phosphocholine + H2O = a 1-acyl-sn-glycero-3-phosphocholine + a fatty acid + H(+). Its function is as follows. Snake venom phospholipase A2 (PLA2) that shows potent hemolytic activity, and exhibits medium anticoagulant effects by binding to factor Xa (F10) and inhibiting the prothrombinase activity (IC(50) is 90 nM). It is one of the few phospholipases A2 capable of hydrolyzing the phospholipids of E.coli membranes in the presence of a bactericidal/permeability-increasing protein (BPI) of neutrophils. PLA2 catalyzes the calcium-dependent hydrolysis of the 2-acyl groups in 3-sn-phosphoglycerides. The polypeptide is Basic phospholipase A2 B (Gloydius halys (Chinese water mocassin)).